The primary structure comprises 84 residues: ATP synthase subunit c (84 aa).

2 helical membrane-spanning segments follow: residues Ile-9–Ile-29 and Ile-54–Ile-74.

This sequence belongs to the ATPase C chain family. In terms of assembly, F-type ATPases have 2 components, F(1) - the catalytic core - and F(0) - the membrane proton channel. F(1) has five subunits: alpha(3), beta(3), gamma(1), delta(1), epsilon(1). F(0) has three main subunits: a(1), b(2) and c(10-14). The alpha and beta chains form an alternating ring which encloses part of the gamma chain. F(1) is attached to F(0) by a central stalk formed by the gamma and epsilon chains, while a peripheral stalk is formed by the delta and b chains.

Its subcellular location is the cell inner membrane. Its function is as follows. F(1)F(0) ATP synthase produces ATP from ADP in the presence of a proton or sodium gradient. F-type ATPases consist of two structural domains, F(1) containing the extramembraneous catalytic core and F(0) containing the membrane proton channel, linked together by a central stalk and a peripheral stalk. During catalysis, ATP synthesis in the catalytic domain of F(1) is coupled via a rotary mechanism of the central stalk subunits to proton translocation. Functionally, key component of the F(0) channel; it plays a direct role in translocation across the membrane. A homomeric c-ring of between 10-14 subunits forms the central stalk rotor element with the F(1) delta and epsilon subunits. This is ATP synthase subunit c from Haemophilus influenzae (strain PittEE).